The following is a 71-amino-acid chain: MKRILVCPVCKSKEVELDAGGYTGKYYCKNCGYVGSFILEMTEGEYREMMEKEKFERKEDEKSKPKGVRED.

The tract at residues 52–71 (KEKFERKEDEKSKPKGVRED) is disordered.

This is an uncharacterized protein from Archaeoglobus fulgidus (strain ATCC 49558 / DSM 4304 / JCM 9628 / NBRC 100126 / VC-16).